The primary structure comprises 355 residues: Peptide chain release factor 1 (355 aa).

Glutamine 233 carries the post-translational modification N5-methylglutamine. The segment covering 280–293 has biased composition (basic and acidic residues); the sequence is ERRKKEQERADSRR. The segment at 280 to 306 is disordered; the sequence is ERRKKEQERADSRRGQVGSGNRSERIR.

It belongs to the prokaryotic/mitochondrial release factor family. Post-translationally, methylated by PrmC. Methylation increases the termination efficiency of RF1.

The protein resides in the cytoplasm. In terms of biological role, peptide chain release factor 1 directs the termination of translation in response to the peptide chain termination codons UAG and UAA. The sequence is that of Peptide chain release factor 1 from Rickettsia africae (strain ESF-5).